A 434-amino-acid chain; its full sequence is MEMSELLASEVVSSGPDYAKKSVDGLNMTAANGTNDTLMTLDEYLNKSLPLHLEQLILDANQKELFDSAAKSLLSSTLLAKQQQSLQIAPIQPQSSFSSQSFAEGLIVGQLSVIVALIFVIKFFVFSEGGTKTATAKSVGSASSFMDSTKNSILSTIIKRGGKDGLEVDDKDNEKSRQINSILEKTYYNVETHSPESLDWFNVLIAQTIHQFREEALQKNNILNSLNDFIERRSNELPQYLDQIKITEVDIGDDFPIFSNCIIQYSPNSNKKRLEAKIDIDLSDRLALGIETKLLLNYPKPFSAALPIKLTVSIVRFQACLTVSLTTDEQFVPTSEETNDDEMGNDKGYYLMFSFNPEYRMELEVKSLIGARSKLENIPKIASLIEYQISKWFVERCVEPRFQFVKLPSMWPRSKNTRKEKTDTDDSVSVKSND.

Over 1 to 105 the chain is Lumenal; the sequence is MEMSELLASE…SFSSQSFAEG (105 aa). Residues 106-126 traverse the membrane as a helical segment; that stretch reads LIVGQLSVIVALIFVIKFFVF. The Cytoplasmic portion of the chain corresponds to 127-434; that stretch reads SEGGTKTATA…DDSVSVKSND (308 aa). One can recognise an SMP-LTD domain in the interval 194–408; that stretch reads SPESLDWFNV…EPRFQFVKLP (215 aa). Positions 415 to 434 are disordered; sequence KNTRKEKTDTDDSVSVKSND.

Belongs to the MMM1 family. As to quaternary structure, homodimer. Component of the ER-mitochondria encounter structure (ERMES) or MDM complex, composed of MMM1, MDM10, MDM12 and MDM34. An MMM1 homodimer associates with one molecule of MDM12 on each side in a pairwise head-to-tail manner, and the SMP-LTD domains of MMM1 and MDM12 generate a continuous hydrophobic tunnel for phospholipid trafficking.

Its subcellular location is the endoplasmic reticulum membrane. Its function is as follows. Component of the ERMES/MDM complex, which serves as a molecular tether to connect the endoplasmic reticulum (ER) and mitochondria. Components of this complex are involved in the control of mitochondrial shape and protein biogenesis, and function in nonvesicular lipid trafficking between the ER and mitochondria. The MDM12-MMM1 subcomplex functions in the major beta-barrel assembly pathway that is responsible for biogenesis of all outer membrane beta-barrel proteins, and acts in a late step after the SAM complex. The MDM10-MDM12-MMM1 subcomplex further acts in the TOM40-specific pathway after the action of the MDM12-MMM1 complex. Essential for establishing and maintaining the structure of mitochondria and maintenance of mtDNA nucleoids. This Kluyveromyces lactis (strain ATCC 8585 / CBS 2359 / DSM 70799 / NBRC 1267 / NRRL Y-1140 / WM37) (Yeast) protein is Maintenance of mitochondrial morphology protein 1.